A 156-amino-acid polypeptide reads, in one-letter code: Ribosomal RNA large subunit methyltransferase H (156 aa).

S-adenosyl-L-methionine contacts are provided by residues leucine 73, glycine 104, and 123–128 (LSPLTL).

It belongs to the RNA methyltransferase RlmH family. As to quaternary structure, homodimer.

It localises to the cytoplasm. It carries out the reaction pseudouridine(1915) in 23S rRNA + S-adenosyl-L-methionine = N(3)-methylpseudouridine(1915) in 23S rRNA + S-adenosyl-L-homocysteine + H(+). Its function is as follows. Specifically methylates the pseudouridine at position 1915 (m3Psi1915) in 23S rRNA. The polypeptide is Ribosomal RNA large subunit methyltransferase H (Pectobacterium atrosepticum (strain SCRI 1043 / ATCC BAA-672) (Erwinia carotovora subsp. atroseptica)).